A 536-amino-acid polypeptide reads, in one-letter code: Glycine-rich extracellular protein 1 (536 aa).

Residues methionine 1–glycine 22 form the signal peptide. 3 disordered regions span residues alanine 111–asparagine 134, glycine 306–tryptophan 336, and glycine 500–cysteine 536. Gly residues predominate over residues phenylalanine 115 to lysine 124. A compositionally biased stretch (gly residues) spans glycine 521–cysteine 536.

This chain is Glycine-rich extracellular protein 1, found in Homo sapiens (Human).